Reading from the N-terminus, the 390-residue chain is Guanidine hydrolase (390 aa).

H174, D199, H201, D203, D291, and D293 together coordinate Ni(2+).

It belongs to the arginase family. Homohexamer. Ni(2+) serves as cofactor.

The protein resides in the cytoplasm. The enzyme catalyses guanidine + H2O = urea + NH4(+). Its activity is regulated as follows. Activation of GdmH depends on the presence of the accessory proteins GhaA (Sll1078) and GhaB (Sll1079), which load nickel into the active site. Hydrolase activity is slightly activated in the presence of GTP. It does not require ATP or NAD(P)H. Addition of Ca(2+), Mn(2+), Fe(2+) or Fe(3+) has no consistent effects, whereas addition of Co(2+), Cu(2+) or Zn(2+) inhibits the activity. In terms of biological role, catalyzes the hydrolysis of guanidine into urea and ammonium. Is highly specific for free guanidine. At pH 8, also catalyzes the release of urea from methylguanidine but with significantly reduced specific activity compared with that for guanidine. Cannot hydrolyze guanidinoacetate, guanidinopropionate, guanidinobutyrate, agmatine, arginine or creatine. Required to use guanidine as the sole nitrogen source for growth. Overexpression of the gene accelerates guanidine degradation and promotes biomass growth. The polypeptide is Guanidine hydrolase (Synechocystis sp. (strain ATCC 27184 / PCC 6803 / Kazusa)).